The following is a 240-amino-acid chain: uncharacterized protein (240 aa).

This is an uncharacterized protein from Bacillus subtilis (strain 168).